Here is a 239-residue protein sequence, read N- to C-terminus: Ribonuclease PH (239 aa).

Phosphate is bound by residues R86 and G124 to R126.

This sequence belongs to the RNase PH family. Homohexameric ring arranged as a trimer of dimers.

It carries out the reaction tRNA(n+1) + phosphate = tRNA(n) + a ribonucleoside 5'-diphosphate. Its function is as follows. Phosphorolytic 3'-5' exoribonuclease that plays an important role in tRNA 3'-end maturation. Removes nucleotide residues following the 3'-CCA terminus of tRNAs; can also add nucleotides to the ends of RNA molecules by using nucleoside diphosphates as substrates, but this may not be physiologically important. Probably plays a role in initiation of 16S rRNA degradation (leading to ribosome degradation) during starvation. The polypeptide is Ribonuclease PH (Sinorhizobium fredii (strain NBRC 101917 / NGR234)).